Reading from the N-terminus, the 270-residue chain is Imidazole glycerol phosphate synthase subunit HisF (270 aa).

Residues aspartate 11 and aspartate 130 contribute to the active site.

It belongs to the HisA/HisF family. As to quaternary structure, heterodimer of HisH and HisF.

The protein localises to the cytoplasm. The catalysed reaction is 5-[(5-phospho-1-deoxy-D-ribulos-1-ylimino)methylamino]-1-(5-phospho-beta-D-ribosyl)imidazole-4-carboxamide + L-glutamine = D-erythro-1-(imidazol-4-yl)glycerol 3-phosphate + 5-amino-1-(5-phospho-beta-D-ribosyl)imidazole-4-carboxamide + L-glutamate + H(+). The protein operates within amino-acid biosynthesis; L-histidine biosynthesis; L-histidine from 5-phospho-alpha-D-ribose 1-diphosphate: step 5/9. Functionally, IGPS catalyzes the conversion of PRFAR and glutamine to IGP, AICAR and glutamate. The HisF subunit catalyzes the cyclization activity that produces IGP and AICAR from PRFAR using the ammonia provided by the HisH subunit. The protein is Imidazole glycerol phosphate synthase subunit HisF of Chloroflexus aggregans (strain MD-66 / DSM 9485).